Reading from the N-terminus, the 266-residue chain is Cell wall synthesis protein Wag31 (266 aa).

A coiled-coil region spans residues 31-64 (FLDLVENELTQLIEENSDLRQRIEELDHELAAGG). Threonine 77 bears the Phosphothreonine mark. Residues 152–203 (TAEATVAEAQQRADAMLADAQTRSEVQSRQAQEKADALQAEAERKHSEIMGA) adopt a coiled-coil conformation. The interval 239–266 (ELGQRGSAAPVDSNADAGGFDQFNRGNN) is disordered.

It belongs to the DivIVA family. Forms homooligomers. In terms of processing, phosphorylated by PknA.

The protein localises to the cytoplasm. Its function is as follows. Important for maintaining cell shape and cell wall integrity by localizing peptidoglycan synthesis to the cell poles. The protein is Cell wall synthesis protein Wag31 (wag31) of Mycobacterium leprae (strain TN).